A 644-amino-acid polypeptide reads, in one-letter code: Cyclin-dependent kinase C-2 C (644 aa).

One can recognise a Protein kinase domain in the interval 105-389 (FQKLEKIGQG…ASSALNSEYF (285 aa)). Residues 111 to 119 (IGQGTYSSV) and K134 contribute to the ATP site. Position 116 is a phosphotyrosine (Y116). D229 acts as the Proton acceptor in catalysis. Position 263 is a phosphothreonine (T263). Residues 420–427 (RKRANLKL) carry the Nuclear localization signal motif. A compositionally biased stretch (basic and acidic residues) spans 565 to 576 (SKLSRIGERHGS). Positions 565 to 591 (SKLSRIGERHGSLDGSGLDFSQREEDS) are disordered.

The protein belongs to the protein kinase superfamily. CMGC Ser/Thr protein kinase family. CDC2/CDKX subfamily. Autophosphorylated. As to expression, expressed specifically in flowers and pollen.

Its subcellular location is the nucleus. This is Cyclin-dependent kinase C-2 C from Arabidopsis thaliana (Mouse-ear cress).